The sequence spans 256 residues: ATP synthase peripheral stalk subunit b, mitochondrial (256 aa).

Residues Met-1–Ala-42 constitute a mitochondrion transit peptide. Position 131 is an N6-succinyllysine (Lys-131). Lys-139, Lys-154, Lys-162, Lys-221, Lys-233, and Lys-244 each carry N6-acetyllysine.

Belongs to the eukaryotic ATPase B chain family. As to quaternary structure, component of the ATP synthase complex composed at least of ATP5F1A/subunit alpha, ATP5F1B/subunit beta, ATP5MC1/subunit c (homooctomer), MT-ATP6/subunit a, MT-ATP8/subunit 8, ATP5ME/subunit e, ATP5MF/subunit f, ATP5MG/subunit g, ATP5MK/subunit k, ATP5MJ/subunit j, ATP5F1C/subunit gamma, ATP5F1D/subunit delta, ATP5F1E/subunit epsilon, ATP5PF/subunit F6, ATP5PB/subunit b, ATP5PD/subunit d, ATP5PO/subunit OSCP. ATP synthase complex consists of a soluble F(1) head domain (subunits alpha(3) and beta(3)) - the catalytic core - and a membrane F(0) domain - the membrane proton channel (subunits c, a, 8, e, f, g, k and j). These two domains are linked by a central stalk (subunits gamma, delta, and epsilon) rotating inside the F1 region and a stationary peripheral stalk (subunits F6, b, d, and OSCP).

The protein localises to the mitochondrion. The protein resides in the mitochondrion inner membrane. Subunit b, of the mitochondrial membrane ATP synthase complex (F(1)F(0) ATP synthase or Complex V) that produces ATP from ADP in the presence of a proton gradient across the membrane which is generated by electron transport complexes of the respiratory chain. ATP synthase complex consist of a soluble F(1) head domain - the catalytic core - and a membrane F(1) domain - the membrane proton channel. These two domains are linked by a central stalk rotating inside the F(1) region and a stationary peripheral stalk. During catalysis, ATP synthesis in the catalytic domain of F(1) is coupled via a rotary mechanism of the central stalk subunits to proton translocation. In vivo, can only synthesize ATP although its ATP hydrolase activity can be activated artificially in vitro. Part of the complex F(0) domain. Part of the complex F(0) domain and the peripheric stalk, which acts as a stator to hold the catalytic alpha(3)beta(3) subcomplex and subunit a/ATP6 static relative to the rotary elements. The sequence is that of ATP synthase peripheral stalk subunit b, mitochondrial from Rattus norvegicus (Rat).